Here is a 232-residue protein sequence, read N- to C-terminus: Large ribosomal subunit protein uL1 (232 aa).

This sequence belongs to the universal ribosomal protein uL1 family. In terms of assembly, part of the 50S ribosomal subunit.

Binds directly to 23S rRNA. The L1 stalk is quite mobile in the ribosome, and is involved in E site tRNA release. Functionally, protein L1 is also a translational repressor protein, it controls the translation of the L11 operon by binding to its mRNA. The sequence is that of Large ribosomal subunit protein uL1 from Methylorubrum populi (strain ATCC BAA-705 / NCIMB 13946 / BJ001) (Methylobacterium populi).